The primary structure comprises 416 residues: ORC1-type DNA replication protein 9 (416 aa).

Residues 79–83 (SGKSL), tyrosine 226, and arginine 238 contribute to the ATP site.

It belongs to the CDC6/cdc18 family.

Involved in regulation of DNA replication. The sequence is that of ORC1-type DNA replication protein 9 (cdc6i) from Haloarcula marismortui (strain ATCC 43049 / DSM 3752 / JCM 8966 / VKM B-1809) (Halobacterium marismortui).